The following is a 290-amino-acid chain: Phosphatidylserine decarboxylase proenzyme (290 aa).

Residues D96, H153, and S257 each act as charge relay system; for autoendoproteolytic cleavage activity in the active site. Catalysis depends on S257, which acts as the Schiff-base intermediate with substrate; via pyruvic acid; for decarboxylase activity. A Pyruvic acid (Ser); by autocatalysis modification is found at S257.

This sequence belongs to the phosphatidylserine decarboxylase family. PSD-B subfamily. Prokaryotic type I sub-subfamily. As to quaternary structure, heterodimer of a large membrane-associated beta subunit and a small pyruvoyl-containing alpha subunit. Requires pyruvate as cofactor. In terms of processing, is synthesized initially as an inactive proenzyme. Formation of the active enzyme involves a self-maturation process in which the active site pyruvoyl group is generated from an internal serine residue via an autocatalytic post-translational modification. Two non-identical subunits are generated from the proenzyme in this reaction, and the pyruvate is formed at the N-terminus of the alpha chain, which is derived from the carboxyl end of the proenzyme. The autoendoproteolytic cleavage occurs by a canonical serine protease mechanism, in which the side chain hydroxyl group of the serine supplies its oxygen atom to form the C-terminus of the beta chain, while the remainder of the serine residue undergoes an oxidative deamination to produce ammonia and the pyruvoyl prosthetic group on the alpha chain. During this reaction, the Ser that is part of the protease active site of the proenzyme becomes the pyruvoyl prosthetic group, which constitutes an essential element of the active site of the mature decarboxylase.

It is found in the cell membrane. The catalysed reaction is a 1,2-diacyl-sn-glycero-3-phospho-L-serine + H(+) = a 1,2-diacyl-sn-glycero-3-phosphoethanolamine + CO2. It participates in phospholipid metabolism; phosphatidylethanolamine biosynthesis; phosphatidylethanolamine from CDP-diacylglycerol: step 2/2. Catalyzes the formation of phosphatidylethanolamine (PtdEtn) from phosphatidylserine (PtdSer). This chain is Phosphatidylserine decarboxylase proenzyme, found in Haemophilus influenzae (strain 86-028NP).